Here is a 159-residue protein sequence, read N- to C-terminus: Ribosomal RNA large subunit methyltransferase H (159 aa).

S-adenosyl-L-methionine contacts are provided by residues leucine 76, glycine 108, and 127 to 132 (FSPMTF).

It belongs to the RNA methyltransferase RlmH family. Homodimer.

It is found in the cytoplasm. The catalysed reaction is pseudouridine(1915) in 23S rRNA + S-adenosyl-L-methionine = N(3)-methylpseudouridine(1915) in 23S rRNA + S-adenosyl-L-homocysteine + H(+). Its function is as follows. Specifically methylates the pseudouridine at position 1915 (m3Psi1915) in 23S rRNA. The protein is Ribosomal RNA large subunit methyltransferase H of Alkaliphilus metalliredigens (strain QYMF).